Reading from the N-terminus, the 802-residue chain is Protein enabled homolog (802 aa).

A WH1 domain is found at 1–111; the sequence is MSEQSICQAR…SAMMHALEVL (111 aa). A compositionally biased stretch (polar residues) spans 143–155; the sequence is NSQLPAQVQNGPS. A disordered region spans residues 143 to 166; sequence NSQLPAQVQNGPSQEELEIQRRQL. Ser-144 is subject to Phosphoserine. Residues 154 to 258 are a coiled coil; that stretch reads PSQEELEIQR…ERERRMSNAA (105 aa). 7 repeat units span residues 175–179, 180–184, 185–189, 190–194, 195–199, 200–204, and 205–209. A 7 X 5 AA tandem repeats of [LM]-E-[QR]-[EQ]-[QR] region spans residues 175 to 209; that stretch reads LERERMERERLERERLERERLERERLEQEQLERQR. Over residues 245–254 the composition is skewed to basic and acidic residues; sequence QVEWERERRM. Disordered stretches follow at residues 245–287 and 341–622; these read QVEW…PSYA and ATVP…RPLT. Ser-255 carries the phosphoserine; by PKA modification. Low complexity predominate over residues 255-278; that stretch reads SNAAPSSDSSLSSAPLPEYSSCQP. The segment covering 348–361 has biased composition (polar residues); it reads NKNSRPSSPVNTPS. Phosphoserine is present on Ser-383. A compositionally biased stretch (low complexity) spans 386–410; sequence IMISSPPGKATGPRPVLPVCVSSPV. Pro residues predominate over residues 431 to 464; it reads VSPPPTSGPAAPPPPPPPPPPPPPPPLPPPPLPP. The segment covering 485-505 has biased composition (low complexity); that stretch reads STPSSKPSVLPSPSAGAPASA. The segment covering 525–535 has biased composition (polar residues); it reads AASQPAESPTP. The segment covering 542–553 has biased composition (pro residues); the sequence is PPAPPPPPPLPS. Position 557 is a phosphotyrosine (Tyr-557). A compositionally biased stretch (pro residues) spans 561 to 605; sequence LPPPPGPPPPPPLPSTGPPPPPPPPPPLPNQAPPPPPPPPAPPLP. The interval 623 to 643 is EVH2 block A; the sequence is GLAAAIAGAKLRKVSRVEDGS. The interval 623–799 is EVH2; the sequence is GLAAAIAGAK…DAIRQELSKS (177 aa). Residues 632–635 carry the KLKR motif; it reads KLRK. Disordered regions lie at residues 639–675 and 691–764; these read VEDG…GGSG and AEKG…TEGL. The span at 664-675 shows a compositional bias: gly residues; that stretch reads RGNGPLPLGGSG. The tract at residues 674 to 691 is EVH2 block B; the sequence is SGLMEEMSALLARRRRIA. The span at 731–760 shows a compositional bias: polar residues; the sequence is RTNTMNGSKSPVISRPKSTPSSQPSANGVQ. Residues Ser-738 and Ser-740 each carry the phosphoserine modification. The interval 765–799 is EVH2 block C; the sequence is DYDRLKQDILDEMRKELAKLKEELIDAIRQELSKS. Residues 767 to 797 are a coiled coil; it reads DRLKQDILDEMRKELAKLKEELIDAIRQELS.

The protein belongs to the Ena/VASP family. In terms of assembly, homotetramer. Interacts with APBB1IP, APBB1, PFN1 and ROBO4. Isoforms, containing the polyproline-rich regions with PPLP motifs, bind the WW domain of APBB1IP. Isoforms, containing the PPSY motif, bind, in vitro, to the WW2 and WW3 domains of NEDD4 and to the WW1 domain of YAP1. Binds the SH3 domain of BAIAP2-alpha but only after the autoinhibitory region of BAIAP2-alpha has been blocked by interaction with CDC42. Interacts, via the EVH1/WH1 domain, with the Pro-rich domains from VCL, ZYX and Listeria monocytogenes actA and with TES (via LIM domain). The TES LIM domain and the Pro-rich domains from VCL or ZYX compete for the same binding site. Interaction with ZYX is important for targeting ENAH to focal adhesions and enhances production of actin-rich structures at the apical surface of cells. Binds GPHN. Heterotrimer with TES and ACTL7A. Interacts with FAT1 (via EVH1 domains). Interacts, through the Pro-rich region, with the C-terminal SH3 domain of DNMPB. Interacts with PRPF40A. NTN1-induced PKA phosphorylation on Ser-255 directly parallels the formation of filopodial protrusions. In terms of tissue distribution, expressed in heart and testis, lower levels in lung, skeletal muscle, kidney, pancreas and brain. Isoform 5 is expressed exclusively in the brain. Isoform 2 is expressed predominantly in brain, testis, ovary and fat. In the brain, isoforms 2 and 5 are expressed at highest levels in the hippocampus, cortex and midbrain, and at lowest levels in the striatum and cerebellum. Isoform 6 is expressed in brain and spleen.

It localises to the cytoplasm. The protein localises to the cytoskeleton. The protein resides in the cell projection. It is found in the lamellipodium. Its subcellular location is the filopodium. It localises to the synapse. The protein localises to the cell junction. The protein resides in the focal adhesion. Ena/VASP proteins are actin-associated proteins involved in a range of processes dependent on cytoskeleton remodeling and cell polarity such as axon guidance and lamellipodial and filopodial dynamics in migrating cells. ENAH induces the formation of F-actin rich outgrowths in fibroblasts. Acts synergistically with BAIAP2-alpha and downstream of NTN1 to promote filipodia formation. In Mus musculus (Mouse), this protein is Protein enabled homolog (Enah).